We begin with the raw amino-acid sequence, 117 residues long: Eukaryotic translation initiation factor 4E-binding protein 1 (117 aa).

Polar residues-rich tracts occupy residues 1-12 and 33-47; these read MSAGSSCSQTPS and YSTT…TTPG. Residues 1–47 are disordered; the sequence is MSAGSSCSQTPSRAIPTRRVALGDGVQLPPGDYSTTPGGTLFSTTPG. Residue S2 is modified to N-acetylserine. Phosphothreonine is present on residues T36 and T40. Position 43 is a phosphoserine (S43). T45 and T49 each carry phosphothreonine. Position 53 is a phosphotyrosine (Y53). The short motif at 53-59 is the YXXXXLphi motif element; that stretch reads YDRKFLM. K56 is covalently cross-linked (Glycyl lysine isopeptide (Lys-Gly) (interchain with G-Cter in ubiquitin)). S64 carries the post-translational modification Phosphoserine. Positions 64–117 are disordered; it reads SPVAKTPPKDLPAIPGVTSPTSDEPPMQASQSQLPSSPEDKRAGGEESQFEMDI. Residue T69 is modified to Phosphothreonine. Polar residues predominate over residues 81 to 99; it reads TSPTSDEPPMQASQSQLPS. S82, S95, S99, S100, and S111 each carry phosphoserine. Positions 113–117 match the TOS motif motif; sequence FEMDI.

Belongs to the eIF4E-binding protein family. Hypophosphorylated EIF4EBP1 competes with EIF4G1/EIF4G3 to interact with EIF4E; insulin stimulated MAP-kinase (MAPK1 and MAPK3) or mTORC1 phosphorylation of EIF4EBP1 causes dissociation of the complex allowing EIF4G1/EIF4G3 to bind and consequent initiation of translation. Interacts (via TOS motif) with RPTOR; promoting phosphorylation by mTORC1. Phosphorylated on serine and threonine residues in response to insulin, EGF and PDGF. Phosphorylation at Thr-36, Thr-45, Ser-64 and Thr-69, corresponding to the hyperphosphorylated form, is regulated by mTORC1 and abolishes binding to EIF4E. Post-translationally, ubiquitinated: when eIF4E levels are low, hypophosphorylated form is ubiquitinated by the BCR(KLHL25) complex, leading to its degradation and serving as a homeostatic mechanism to maintain translation and prevent eIF4E inhibition when eIF4E levels are low. Not ubiquitinated when hyperphosphorylated (at Thr-36, Thr-45, Ser-64 and Thr-69) or associated with eIF4E. As to expression, highest expression in fat cells.

It is found in the cytoplasm. Its subcellular location is the nucleus. Its function is as follows. Repressor of translation initiation that regulates EIF4E activity by preventing its assembly into the eIF4F complex: hypophosphorylated form competes with EIF4G1/EIF4G3 and strongly binds to EIF4E, leading to repress translation. In contrast, hyperphosphorylated form dissociates from EIF4E, allowing interaction between EIF4G1/EIF4G3 and EIF4E, leading to initiation of translation. Mediates the regulation of protein translation by hormones, growth factors and other stimuli that signal through the MAP kinase and mTORC1 pathways. The chain is Eukaryotic translation initiation factor 4E-binding protein 1 (Eif4ebp1) from Mus musculus (Mouse).